The following is a 348-amino-acid chain: Heptaprenyl diphosphate synthase component 2 (348 aa).

Lys-73, Arg-76, and His-105 together coordinate isopentenyl diphosphate. Mg(2+)-binding residues include Asp-112 and Asp-116. Arg-121 lines the all-trans-hexaprenyl diphosphate pocket. Residue Arg-122 participates in isopentenyl diphosphate binding. Residues Lys-198, Thr-199, and Gln-236 each coordinate all-trans-hexaprenyl diphosphate.

It belongs to the FPP/GGPP synthase family. In terms of assembly, heterodimer of component I and II. Requires Mg(2+) as cofactor.

It catalyses the reaction 4 isopentenyl diphosphate + (2E,6E)-farnesyl diphosphate = all-trans-heptaprenyl diphosphate + 4 diphosphate. In terms of biological role, supplies heptaprenyl diphosphate, the precursor for the side chain of the isoprenoid quinone menaquinone-7 (MQ-7). In Bacillus subtilis (strain 168), this protein is Heptaprenyl diphosphate synthase component 2 (hepT).